Reading from the N-terminus, the 587-residue chain is Tripartite motif-containing protein 29 (587 aa).

Positions 1 to 71 (MEGADACRSN…SGEGKSGLFS (71 aa)) are disordered. Residues serine 21, serine 28, serine 58, and serine 104 each carry the phosphoserine modification. Tyrosine 106 carries the phosphotyrosine modification. A B box-type zinc finger spans residues 220-260 (FEARKCPLHGKTMELFCQTDQTCICYLCMFQEHKNHSTVTV). Residues cysteine 225, histidine 228, cysteine 247, and histidine 252 each contribute to the Zn(2+) site. Residues 259–348 (TVEEAKAEKE…AVDQVKVIVD (90 aa)) adopt a coiled-coil conformation. At threonine 476 the chain carries Phosphothreonine. Serine 489 is modified (phosphoserine).

In terms of assembly, interacts with VIM and HINT1. Interacts with IKBKG/NEMO. Interacts with STING1.

The protein localises to the cytoplasm. Its subcellular location is the lysosome. Plays a crucial role in the regulation of macrophage activation in response to viral or bacterial infections within the respiratory tract. Mechanistically, TRIM29 interacts with IKBKG/NEMO in the lysosome where it induces its 'Lys-48' ubiquitination and subsequent degradation. In turn, the expression of type I interferons and the production of pro-inflammatory cytokines are inhibited. Additionally, induces the 'Lys-48' ubiquitination of STING1 in a similar way, leading to its degradation. This is Tripartite motif-containing protein 29 (Trim29) from Mus musculus (Mouse).